The chain runs to 177 residues: ATP-dependent protease subunit HslV (177 aa).

The active site involves threonine 7. 3 residues coordinate Na(+): alanine 162, cysteine 165, and threonine 168.

The protein belongs to the peptidase T1B family. HslV subfamily. In terms of assembly, a double ring-shaped homohexamer of HslV is capped on each side by a ring-shaped HslU homohexamer. The assembly of the HslU/HslV complex is dependent on binding of ATP.

Its subcellular location is the cytoplasm. The enzyme catalyses ATP-dependent cleavage of peptide bonds with broad specificity.. Allosterically activated by HslU binding. Protease subunit of a proteasome-like degradation complex believed to be a general protein degrading machinery. This chain is ATP-dependent protease subunit HslV, found in Leptospira biflexa serovar Patoc (strain Patoc 1 / Ames).